The sequence spans 529 residues: Mitochondrial inner membrane magnesium transporter MIT1 (529 aa).

Coiled coils occupy residues 336–388 (KIQL…LKNE) and 416–450 (LLETHLQLTDELSGELENMEEKITHYEELMRLNLD). Residues 456–476 (FILLNAKISFSTLFCSICAVI) form a helical membrane-spanning segment. At 477–492 (TSLFGMNLKNFIEHND) the chain is on the mitochondrial intermembrane side. A helical transmembrane segment spans residues 493–513 (YAFFIVSIFITSWSIVGIYFT). The Mitochondrial matrix portion of the chain corresponds to 514 to 529 (KNINTLLRFFDKYNVK).

This sequence belongs to the CorA metal ion transporter (MIT) (TC 1.A.35) family.

It localises to the mitochondrion inner membrane. Its function is as follows. Mitochondrial inner membrane magnesium transporter required for mitochondrial magnesium homeostasis. Involved in the development of the sporozoite in the mosquito vector midgut. The chain is Mitochondrial inner membrane magnesium transporter MIT1 from Plasmodium falciparum (isolate 3D7).